Here is a 487-residue protein sequence, read N- to C-terminus: Probable cobyric acid synthase (487 aa).

Residues 249 to 435 enclose the GATase cobBQ-type domain; that stretch reads DVDIAVVRFP…LHGIFNNASF (187 aa). Cys-328 serves as the catalytic Nucleophile. The active site involves His-427.

It belongs to the CobB/CobQ family. CobQ subfamily.

Its pathway is cofactor biosynthesis; adenosylcobalamin biosynthesis. In terms of biological role, catalyzes amidations at positions B, D, E, and G on adenosylcobyrinic A,C-diamide. NH(2) groups are provided by glutamine, and one molecule of ATP is hydrogenolyzed for each amidation. The protein is Probable cobyric acid synthase of Methanocella arvoryzae (strain DSM 22066 / NBRC 105507 / MRE50).